The primary structure comprises 408 residues: MQVEILATGDELLTGQVVDTNSPWLMDRLWDLGLMVRRKTLVADDRDDLRAAILETTARADLVVMSGGMGPTEDDLTSECVAAVLGVPLERHEPSIEVLRERFRKFGRALTPNNEKQAWFPRGAEVIPNRWGSAPGFTVPVGRGRVVCLPGVPVEYRGLCEEWVLPHVGARLSEVPAAGLVKLFAVPESHADHAMRPVMDDPANAGVRFGYRAHWPETHVKWTVPGPDAAGRAARIRERVLGIFGEQVFGEGKDELPDLVVARLAARGERVALGESCTGGMVAELLTAVPGASAVLDLGVVAYANAAKERVLGVPAELLAAHGAVSEPVARALAEGARRAGGAAWGVGITGIAGPSGGTPEKPVGTVHLAVAGPSGTETVARAYRGDRDRVRRQAAYEALNLLRLALR.

Belongs to the CinA family.

The sequence is that of CinA-like protein from Anaeromyxobacter dehalogenans (strain 2CP-1 / ATCC BAA-258).